Here is a 530-residue protein sequence, read N- to C-terminus: T-complex protein 1 subunit gamma (530 aa).

It belongs to the TCP-1 chaperonin family. As to quaternary structure, heterooligomeric complex of about 850 to 900 kDa that forms two stacked rings, 12 to 16 nm in diameter.

It localises to the cytoplasm. Molecular chaperone; assists the folding of proteins upon ATP hydrolysis. Known to play a role, in vitro, in the folding of actin and tubulin. In Dictyostelium discoideum (Social amoeba), this protein is T-complex protein 1 subunit gamma (cct3).